A 388-amino-acid chain; its full sequence is Chorismate synthase (388 aa).

2 residues coordinate NADP(+): R39 and R45. Positions 95–118 (EKNEKSRRVSRPRPGHADLVGGMK) are disordered. Residues 130–132 (RSS), 251–252 (NA), G296, 311–315 (KPIPT), and R337 contribute to the FMN site.

The protein belongs to the chorismate synthase family. As to quaternary structure, homotetramer. It depends on FMNH2 as a cofactor.

The catalysed reaction is 5-O-(1-carboxyvinyl)-3-phosphoshikimate = chorismate + phosphate. It participates in metabolic intermediate biosynthesis; chorismate biosynthesis; chorismate from D-erythrose 4-phosphate and phosphoenolpyruvate: step 7/7. Catalyzes the anti-1,4-elimination of the C-3 phosphate and the C-6 proR hydrogen from 5-enolpyruvylshikimate-3-phosphate (EPSP) to yield chorismate, which is the branch point compound that serves as the starting substrate for the three terminal pathways of aromatic amino acid biosynthesis. This reaction introduces a second double bond into the aromatic ring system. This Listeria monocytogenes serotype 4b (strain F2365) protein is Chorismate synthase.